Consider the following 161-residue polypeptide: Cytochrome c-type biogenesis protein CcmE (161 aa).

Residues 1–8 are Cytoplasmic-facing; it reads MNARRKKR. The chain crosses the membrane as a helical; Signal-anchor for type II membrane protein span at residues 9–29; sequence LTLAVALIGGVAAIASLLLYA. Over 30–161 the chain is Periplasmic; sequence LNSNLNLFYT…DYNEQQKTSY (132 aa). Heme-binding residues include histidine 131 and tyrosine 135.

The protein belongs to the CcmE/CycJ family.

Its subcellular location is the cell inner membrane. In terms of biological role, heme chaperone required for the biogenesis of c-type cytochromes. Transiently binds heme delivered by CcmC and transfers the heme to apo-cytochromes in a process facilitated by CcmF and CcmH. The protein is Cytochrome c-type biogenesis protein CcmE of Shewanella sediminis (strain HAW-EB3).